A 149-amino-acid polypeptide reads, in one-letter code: Large ribosomal subunit protein bL9 (149 aa).

This sequence belongs to the bacterial ribosomal protein bL9 family.

Binds to the 23S rRNA. The polypeptide is Large ribosomal subunit protein bL9 (Haemophilus influenzae (strain PittEE)).